A 211-amino-acid chain; its full sequence is uncharacterized protein (211 aa).

The protein belongs to the A.longa ORF167/ORF288 family.

Its subcellular location is the plastid. This is an uncharacterized protein from Euglena longa (Euglenophycean alga).